Consider the following 327-residue polypeptide: cAMP-dependent protein kinase regulatory subunit (327 aa).

A disordered region spans residues 1–47 (MTNNISHNQKATEKVEAQNNNNITRKRRGAISSEPLGDKPATPLPNI). The interval 1-65 (MTNNISHNQK…RLEQALSNNI (65 aa)) is dimerization and phosphorylation. The Pseudophosphorylation motif signature appears at 27 to 31 (RRGAI). A Phosphoserine modification is found at serine 32. Residues 66–188 (MFSH…EKVS), glutamate 136, arginine 145, 189–327 (ILRH…SQKS), glutamate 262, and arginine 271 each bind 3',5'-cyclic AMP.

The protein belongs to the cAMP-dependent kinase regulatory chain family. In Dictyostelium the holoenzyme is a dimer composed of a regulatory (R) and a catalytic (C) subunit. In the presence of cAMP it dissociates into the active C subunit and an R monomer. In other eukaryotes the holoenzyme is a tetramer composed of 2 regulatory (R) and 2 catalytic (C) subunits. In the presence of cAMP it dissociates into active monomeric C subunits and an R dimer. In terms of processing, the pseudophosphorylation site binds to the substrate-binding region of the catalytic chain but is not phosphorylated. The physiological significance of phosphorylations by other kinases is unclear.

This is cAMP-dependent protein kinase regulatory subunit (pkaR) from Dictyostelium discoideum (Social amoeba).